We begin with the raw amino-acid sequence, 422 residues long: Solute carrier family 35 member D3 (422 aa).

Helical transmembrane passes span 9 to 29, 38 to 58, 64 to 84, 103 to 123, 131 to 151, 155 to 175, 187 to 207, 224 to 244, 257 to 277, and 280 to 300; these read VLGISVAIAHGVFSGSLNILL, FSFLTLVQCLTSSTAALSLEL, LIAVPPFGLSLARSFAGVAVL, MYVVFKRCLPLVTMLIGVLVL, GVLAAVLITTCGAALAGAGDL, PIGYVTGVLAVLVHAAYLVLI, LTAQYVIAVSATPLLVICSFA, AMVSIFVACILIGCAMNFTTL, FVGVVKSIATITVGMVAFSDV, and TSLFIAGVVVNTLGSIIYCVA. The disordered stretch occupies residues 339–365; sequence AKSGNSEPESAEGAGDSVQQGGQESRG. A compositionally biased stretch (polar residues) spans 355-364; sequence SVQQGGQESR.

Belongs to the TPT transporter family. SLC35D subfamily. In terms of assembly, could interact with ATG14, BECN1 and PIK3C3 that form the PI3KC3-C1/AIC/autophagy initiation complex; enhancing the formation of the AIC and promoting autophagy. Expressed in brain. Expressed in subsets of dopaminergic neurons. Expressed in maturing megakaryocytes.

It localises to the cytoplasmic vesicle. The protein localises to the secretory vesicle. Its subcellular location is the synaptic vesicle membrane. The protein resides in the early endosome membrane. It is found in the endoplasmic reticulum membrane. It catalyses the reaction UDP-alpha-D-glucose(in) = UDP-alpha-D-glucose(out). With respect to regulation, inhibited by proton uncouplers that directly abolish the proton electrochemical gradient. Probable UDP-glucose transmembrane transporter involved in UDP-glucose transport from the cytosol to the lumen of synaptic vesicles. It is involved in platelet dense granules maturation. Functionally, alternatively, could function as a molecular adapter enhancing the formation of the PI3KC3-C1/AIC/autophagy initiation complex to promote autophagy in dopaminergic neurons. Could also regulate the plasma membrane localization of the D(1A) dopamine receptor/DRD1 and dopamine signaling. This Mus musculus (Mouse) protein is Solute carrier family 35 member D3.